A 551-amino-acid polypeptide reads, in one-letter code: Bestrophin-1 (551 aa).

At 1-31 (MTITYTNKVANARLGSFSSLLLCWRGSIYKL) the chain is on the cytoplasmic side. Ala-10 is a binding site for Ca(2+). Residues 32–51 (LYGEFLVFIFLYYSIRGLYR) form a helical membrane-spanning segment. Topologically, residues 52-60 (MVLSSDQQL) are extracellular. The helical transmembrane segment at 61–82 (LFEKLALYCDSYIQLIPISFVL) threads the bilayer. Residues 83–237 (GFYVTLVVSR…DWISIPLVYT (155 aa)) lie on the Cytoplasmic side of the membrane. A helical transmembrane segment spans residues 238–255 (QVVTVAVYSFFLACLIGR). Residues 256–274 (QFLNPNKDYPGHEMDLVVP) lie on the Extracellular side of the membrane. The helical transmembrane segment at 275 to 288 (VFTILQFLFYMGWL) threads the bilayer. At 289–551 (KVAEQLINPF…EAGTKPVLYE (263 aa)) the chain is on the cytoplasmic side. Ca(2+)-binding residues include Gln-293, Asn-296, Asp-301, and Asp-304. The interval 346-379 (PYTAASARSRRHSFMGSTFNISLKKEDLELWSKE) is auto-inhibitory segment. The segment at 459–489 (SHCGPQAPSSHPTEQSAPSSSDTGDGPSTDY) is disordered. Residues 465–475 (APSSHPTEQSA) show a composition bias toward polar residues. The span at 476-488 (PSSSDTGDGPSTD) shows a compositional bias: low complexity.

Belongs to the anion channel-forming bestrophin (TC 1.A.46) family. Calcium-sensitive chloride channel subfamily. In terms of assembly, interacts with YWHAG; this interaction promotes the ligand-gated L-glutamate channel activity leading to the positive regulation of NMDA glutamate receptor activity through the L-glutamate secretion.

The protein localises to the cell membrane. Its subcellular location is the basolateral cell membrane. It catalyses the reaction 4-aminobutanoate(in) = 4-aminobutanoate(out). It carries out the reaction L-glutamate(out) = L-glutamate(in). The enzyme catalyses chloride(in) = chloride(out). The catalysed reaction is hydrogencarbonate(in) = hydrogencarbonate(out). It catalyses the reaction D-serine(in) = D-serine(out). Its activity is regulated as follows. Inactivated by sulfhydryl-reactive agents. Functionally, ligand-gated anion channel that allows the movement of anions across cell membranes when activated by calcium (Ca2+). Allows the movement of chloride and hydrogencarbonate. Found in a partially open conformation leading to significantly smaller chloride movement. Upon F2R/PAR-1 activation, the sequestered calcium is released into the cytosol of astrocytes, leading to the (Ca2+)-dependent release of L-glutamate into the synaptic cleft that targets the neuronal postsynaptic GRIN2A/NMDAR receptor resulting in the synaptic plasticity regulation. Upon activation of the norepinephrine-alpha-1 adrenergic receptor signaling pathway, transports as well D-serine than L-glutamate in a (Ca2+)-dependent manner, leading to activation of adjacent NMDAR receptors and therefore regulates the heterosynaptic long-term depression and metaplasticity during initial memory acquisition. Releases the 4-aminobutanoate neurotransmitter in a (Ca2+)-dependent manner, and participates in its tonic release from cerebellar glial cells. The protein is Bestrophin-1 of Mus musculus (Mouse).